Here is a 305-residue protein sequence, read N- to C-terminus: Probable aspartoacylase (305 aa).

Positions 13 and 16 each coordinate Zn(2+). Substrate is bound by residues R55 and 62-63 (NR). H105 provides a ligand contact to Zn(2+). Residues E163 and Y273 each contribute to the substrate site.

The protein belongs to the AspA/AstE family. Aspartoacylase subfamily. Zn(2+) serves as cofactor.

The catalysed reaction is an N-acyl-L-aspartate + H2O = a carboxylate + L-aspartate. The protein is Probable aspartoacylase of Prochlorococcus marinus (strain NATL2A).